The primary structure comprises 342 residues: Subtilisin-like serine protease Rho m 2.0101 (342 aa).

A propeptide spans 1–30 (TMELLEDLIEQVRQLPMVNFIEKNSLVHAN) (removed in mature form). The Inhibitor I9 domain occupies 1–30 (TMELLEDLIEQVRQLPMVNFIEKNSLVHAN). The Peptidase S8 domain maps to 39-342 (PWGLARISHR…GQNLTKFWGH (304 aa)). Active-site charge relay system residues include aspartate 75 and histidine 107. N-linked (GlcNAc...) asparagine glycans are attached at residues asparagine 137 and asparagine 171. The active-site Charge relay system is serine 267. Asparagine 335 is a glycosylation site (N-linked (GlcNAc...) asparagine).

It belongs to the peptidase S8 family.

Its function is as follows. Serine protease. This Rhodotorula mucilaginosa (Yeast) protein is Subtilisin-like serine protease Rho m 2.0101.